A 438-amino-acid chain; its full sequence is Glutamyl-tRNA(Gln) amidotransferase subunit D (438 aa).

Positions 91 to 421 constitute an Asparaginase/glutaminase domain; it reads KNLSILSTGG…SEIYEIMKTN (331 aa). Residues T101, T177, D178, and K254 contribute to the active site.

Belongs to the asparaginase 1 family. GatD subfamily. Heterodimer of GatD and GatE.

The enzyme catalyses L-glutamyl-tRNA(Gln) + L-glutamine + ATP + H2O = L-glutaminyl-tRNA(Gln) + L-glutamate + ADP + phosphate + H(+). Functionally, allows the formation of correctly charged Gln-tRNA(Gln) through the transamidation of misacylated Glu-tRNA(Gln) in organisms which lack glutaminyl-tRNA synthetase. The reaction takes place in the presence of glutamine and ATP through an activated gamma-phospho-Glu-tRNA(Gln). The GatDE system is specific for glutamate and does not act on aspartate. The chain is Glutamyl-tRNA(Gln) amidotransferase subunit D from Methanosphaera stadtmanae (strain ATCC 43021 / DSM 3091 / JCM 11832 / MCB-3).